The chain runs to 780 residues: APC membrane recruitment protein 3 (780 aa).

The segment covering 20–32 has biased composition (basic and acidic residues); that stretch reads KLIDSPAKEDPDK. Disordered stretches follow at residues 20-59, 341-407, 547-569, 582-617, 635-659, 706-729, and 749-780; these read KLID…QGYG, ELPL…FPRD, KGRE…AHSG, GEPA…TMTS, KELG…GSAL, KNPI…SPQD, and LGPQ…SVGS. Polar residues predominate over residues 354–376; the sequence is SKASSIDTGTPKSEQPESVSTSD. The segment covering 602–617 has biased composition (polar residues); it reads QDFSEGQSSSEATMTS. Polar residues predominate over residues 753–763; that stretch reads ACSSVDSQPQQ.

The protein belongs to the Amer family.

Its subcellular location is the cell membrane. In terms of biological role, regulator of the canonical Wnt signaling pathway. Acts by specifically binding phosphatidylinositol 4,5-bisphosphate (PtdIns(4,5)P2), translocating to the cell membrane. This Mus musculus (Mouse) protein is APC membrane recruitment protein 3 (Amer3).